The following is a 119-amino-acid chain: Large ribosomal subunit protein bL20 (119 aa).

This sequence belongs to the bacterial ribosomal protein bL20 family.

In terms of biological role, binds directly to 23S ribosomal RNA and is necessary for the in vitro assembly process of the 50S ribosomal subunit. It is not involved in the protein synthesizing functions of that subunit. This chain is Large ribosomal subunit protein bL20, found in Azorhizobium caulinodans (strain ATCC 43989 / DSM 5975 / JCM 20966 / LMG 6465 / NBRC 14845 / NCIMB 13405 / ORS 571).